The following is a 150-amino-acid chain: Arginine repressor (150 aa).

This sequence belongs to the ArgR family.

It is found in the cytoplasm. Its pathway is amino-acid biosynthesis; L-arginine biosynthesis [regulation]. Its function is as follows. Regulates arginine biosynthesis genes. This is Arginine repressor from Staphylococcus carnosus (strain TM300).